The following is a 294-amino-acid chain: Ferredoxin--NADP reductase (294 aa).

One can recognise an FAD-binding FR-type domain in the interval 13–137; it reads KNPYIGKCLS…TGPVGKEMLL (125 aa). Residues 72–75, 93–95, Y99, 111–113, and T152 each bind FAD; these read RLYS, CVR, and VCS. 2 residues coordinate NADP(+): S75 and R95. Residues T152, 184 to 185, 214 to 215, K224, 224 to 228, 253 to 254, and E292 contribute to the NADP(+) site; these read IP, SR, KMYIQ, and GL.

It belongs to the ferredoxin--NADP reductase type 1 family. The cofactor is FAD.

The protein resides in the cellular thylakoid membrane. The enzyme catalyses 2 reduced [2Fe-2S]-[ferredoxin] + NADP(+) + H(+) = 2 oxidized [2Fe-2S]-[ferredoxin] + NADPH. This chain is Ferredoxin--NADP reductase (petH), found in Spirulina sp.